We begin with the raw amino-acid sequence, 402 residues long: NADH-quinone oxidoreductase subunit D (402 aa).

It belongs to the complex I 49 kDa subunit family. As to quaternary structure, NDH-1 is composed of 14 different subunits. Subunits NuoB, C, D, E, F, and G constitute the peripheral sector of the complex.

It is found in the cell inner membrane. It catalyses the reaction a quinone + NADH + 5 H(+)(in) = a quinol + NAD(+) + 4 H(+)(out). NDH-1 shuttles electrons from NADH, via FMN and iron-sulfur (Fe-S) centers, to quinones in the respiratory chain. The immediate electron acceptor for the enzyme in this species is believed to be ubiquinone. Couples the redox reaction to proton translocation (for every two electrons transferred, four hydrogen ions are translocated across the cytoplasmic membrane), and thus conserves the redox energy in a proton gradient. This chain is NADH-quinone oxidoreductase subunit D, found in Cereibacter sphaeroides (strain ATCC 17029 / ATH 2.4.9) (Rhodobacter sphaeroides).